The following is a 331-amino-acid chain: Ferredoxin--NADP reductase 2 (331 aa).

The FAD site is built by Glu37, Gln45, Tyr50, Val90, Phe124, Asp285, and Thr326.

It belongs to the ferredoxin--NADP reductase type 2 family. Homodimer. It depends on FAD as a cofactor.

The enzyme catalyses 2 reduced [2Fe-2S]-[ferredoxin] + NADP(+) + H(+) = 2 oxidized [2Fe-2S]-[ferredoxin] + NADPH. This is Ferredoxin--NADP reductase 2 from Bacillus velezensis (strain DSM 23117 / BGSC 10A6 / LMG 26770 / FZB42) (Bacillus amyloliquefaciens subsp. plantarum).